The primary structure comprises 188 residues: mRNA transport factor GFD1 (188 aa).

The tract at residues 1 to 128 (MPLESIWADA…KTQSKQDTAS (128 aa)) is disordered. Residues 18–28 (KQKPSHKRSNN) are compositionally biased toward basic residues. Residues 29–44 (NKKNNNSRWSNESSSN) show a composition bias toward low complexity. The segment covering 59 to 79 (GNHESKTKNKIKETLPREKKP) has biased composition (basic and acidic residues). Phosphoserine is present on residues S87, S106, and S111. Positions 112 to 128 (PSKMKTTKTQSKQDTAS) are enriched in low complexity. Residues 119–164 (KTQSKQDTASKMKLLKKKIEEQREILQKTHHKNQQQQVLMDFLNDE) are a coiled coil.

In terms of assembly, interacts with GLE1, NUP42, NAB2, ZDS1 and probably DBP5. Forms a complex with GLE1 and NAB2.

Its subcellular location is the cytoplasm. The protein localises to the nucleus. The protein resides in the nuclear pore complex. It localises to the nucleus membrane. High-copy suppressor of mutant alleles of ATP-dependent RNA helicase DBP5, which is involved in mRNA export from the nucleus. It may also play an important role in a late stage of NAB2-mRNA export. The sequence is that of mRNA transport factor GFD1 (GFD1) from Saccharomyces cerevisiae (strain ATCC 204508 / S288c) (Baker's yeast).